The following is a 211-amino-acid chain: N-(5'-phosphoribosyl)anthranilate isomerase (211 aa).

It belongs to the TrpF family.

It catalyses the reaction N-(5-phospho-beta-D-ribosyl)anthranilate = 1-(2-carboxyphenylamino)-1-deoxy-D-ribulose 5-phosphate. Its pathway is amino-acid biosynthesis; L-tryptophan biosynthesis; L-tryptophan from chorismate: step 3/5. This chain is N-(5'-phosphoribosyl)anthranilate isomerase, found in Nitrosomonas europaea (strain ATCC 19718 / CIP 103999 / KCTC 2705 / NBRC 14298).